Here is a 663-residue protein sequence, read N- to C-terminus: Transketolase 2 (663 aa).

Residue histidine 25 coordinates substrate. Thiamine diphosphate-binding positions include histidine 65 and 113–115 (GPL). Aspartate 154 contacts Mg(2+). Thiamine diphosphate is bound by residues glycine 155 and asparagine 184. Asparagine 184 and isoleucine 186 together coordinate Mg(2+). Positions 259, 356, and 383 each coordinate substrate. Histidine 259 contacts thiamine diphosphate. Glutamate 410 (proton donor) is an active-site residue. Phenylalanine 436 is a binding site for thiamine diphosphate. Residues histidine 460, aspartate 468, and arginine 519 each contribute to the substrate site.

This sequence belongs to the transketolase family. Homodimer. The cofactor is Mg(2+). It depends on Ca(2+) as a cofactor. Mn(2+) serves as cofactor. Requires Co(2+) as cofactor. Thiamine diphosphate is required as a cofactor.

It carries out the reaction D-sedoheptulose 7-phosphate + D-glyceraldehyde 3-phosphate = aldehydo-D-ribose 5-phosphate + D-xylulose 5-phosphate. Catalyzes the transfer of a two-carbon ketol group from a ketose donor to an aldose acceptor, via a covalent intermediate with the cofactor thiamine pyrophosphate. In Aliivibrio fischeri (strain ATCC 700601 / ES114) (Vibrio fischeri), this protein is Transketolase 2 (tkt2).